We begin with the raw amino-acid sequence, 503 residues long: Aspartyl/glutamyl-tRNA(Asn/Gln) amidotransferase subunit B (503 aa).

The protein belongs to the GatB/GatE family. GatB subfamily. As to quaternary structure, heterotrimer of A, B and C subunits.

It catalyses the reaction L-glutamyl-tRNA(Gln) + L-glutamine + ATP + H2O = L-glutaminyl-tRNA(Gln) + L-glutamate + ADP + phosphate + H(+). The enzyme catalyses L-aspartyl-tRNA(Asn) + L-glutamine + ATP + H2O = L-asparaginyl-tRNA(Asn) + L-glutamate + ADP + phosphate + 2 H(+). Its function is as follows. Allows the formation of correctly charged Asn-tRNA(Asn) or Gln-tRNA(Gln) through the transamidation of misacylated Asp-tRNA(Asn) or Glu-tRNA(Gln) in organisms which lack either or both of asparaginyl-tRNA or glutaminyl-tRNA synthetases. The reaction takes place in the presence of glutamine and ATP through an activated phospho-Asp-tRNA(Asn) or phospho-Glu-tRNA(Gln). In Ruegeria pomeroyi (strain ATCC 700808 / DSM 15171 / DSS-3) (Silicibacter pomeroyi), this protein is Aspartyl/glutamyl-tRNA(Asn/Gln) amidotransferase subunit B.